Reading from the N-terminus, the 207-residue chain is Probable nicotinate-nucleotide adenylyltransferase (207 aa).

This sequence belongs to the NadD family.

The catalysed reaction is nicotinate beta-D-ribonucleotide + ATP + H(+) = deamido-NAD(+) + diphosphate. It participates in cofactor biosynthesis; NAD(+) biosynthesis; deamido-NAD(+) from nicotinate D-ribonucleotide: step 1/1. In terms of biological role, catalyzes the reversible adenylation of nicotinate mononucleotide (NaMN) to nicotinic acid adenine dinucleotide (NaAD). The polypeptide is Probable nicotinate-nucleotide adenylyltransferase (Desulfitobacterium hafniense (strain Y51)).